We begin with the raw amino-acid sequence, 945 residues long: Isoleucine--tRNA ligase (945 aa).

A 'HIGH' region motif is present at residues 67 to 77 (PYANGQIHLGH). E573 lines the L-isoleucyl-5'-AMP pocket. Residues 614 to 618 (KMSKS) carry the 'KMSKS' region motif. K617 provides a ligand contact to ATP. Residues C908, C911, C928, and C931 each contribute to the Zn(2+) site.

This sequence belongs to the class-I aminoacyl-tRNA synthetase family. IleS type 1 subfamily. In terms of assembly, monomer. It depends on Zn(2+) as a cofactor.

The protein localises to the cytoplasm. It carries out the reaction tRNA(Ile) + L-isoleucine + ATP = L-isoleucyl-tRNA(Ile) + AMP + diphosphate. In terms of biological role, catalyzes the attachment of isoleucine to tRNA(Ile). As IleRS can inadvertently accommodate and process structurally similar amino acids such as valine, to avoid such errors it has two additional distinct tRNA(Ile)-dependent editing activities. One activity is designated as 'pretransfer' editing and involves the hydrolysis of activated Val-AMP. The other activity is designated 'posttransfer' editing and involves deacylation of mischarged Val-tRNA(Ile). The polypeptide is Isoleucine--tRNA ligase (Acinetobacter baylyi (strain ATCC 33305 / BD413 / ADP1)).